The following is a 204-amino-acid chain: Guanylate kinase (204 aa).

Residues 5–184 form the Guanylate kinase-like domain; sequence GLLIVLSGPS…ACDKIKAIVL (180 aa). Position 12–19 (12–19) interacts with ATP; that stretch reads GPSGVGKG.

Belongs to the guanylate kinase family.

The protein resides in the cytoplasm. The enzyme catalyses GMP + ATP = GDP + ADP. In terms of biological role, essential for recycling GMP and indirectly, cGMP. The protein is Guanylate kinase (gmk) of Bacillus subtilis (strain 168).